Reading from the N-terminus, the 601-residue chain is Nuclear envelope protein ndc1 (601 aa).

Residues Met-1–Ala-34 are Cytoplasmic-facing. A helical transmembrane segment spans residues Cys-35–Ile-55. Over Ser-56–Ser-58 the chain is Perinuclear space. A helical transmembrane segment spans residues Phe-59–Val-79. Over Met-80–Lys-106 the chain is Cytoplasmic. A helical transmembrane segment spans residues Ser-107–Ile-127. Over Lys-128–Arg-153 the chain is Perinuclear space. The helical transmembrane segment at Phe-154–Tyr-174 threads the bilayer. Residues Leu-175–Arg-182 are Cytoplasmic-facing. A helical membrane pass occupies residues Pro-183–Phe-203. The Perinuclear space portion of the chain corresponds to Ser-204–Leu-256. A helical membrane pass occupies residues Leu-257–Phe-277. Residues Arg-278–Ser-601 are Cytoplasmic-facing.

Belongs to the NDC1 family. As to quaternary structure, component of the nuclear pore complex (NPC). NPC constitutes the exclusive means of nucleocytoplasmic transport. NPCs allow the passive diffusion of ions and small molecules and the active, nuclear transport receptor-mediated bidirectional transport of macromolecules such as proteins, RNAs, ribonucleoparticles (RNPs), and ribosomal subunits across the nuclear envelope. Due to its 8-fold rotational symmetry, all subunits are present with 8 copies or multiples thereof.

The protein localises to the nucleus. Its subcellular location is the nuclear pore complex. The protein resides in the nucleus membrane. It is found in the cytoplasm. It localises to the cytoskeleton. The protein localises to the microtubule organizing center. Its subcellular location is the spindle pole body. Component of the nuclear pore complex (NPC) and the spindle pole body (SPB), which plays a key role in de novo assembly and insertion of both structures in the nuclear envelope. Involved in the formation of the bipolar mitotic spindle. Anchors the spindle pole body in the nuclear envelope. This Schizosaccharomyces pombe (strain 972 / ATCC 24843) (Fission yeast) protein is Nuclear envelope protein ndc1 (cut11).